Here is a 90-residue protein sequence, read N- to C-terminus: Small ribosomal subunit protein bS18 (90 aa).

The tract at residues 1–24 (MKPMRQKPGRGQGNKSISNALASK) is disordered.

It belongs to the bacterial ribosomal protein bS18 family. Part of the 30S ribosomal subunit. Forms a tight heterodimer with protein bS6.

Its function is as follows. Binds as a heterodimer with protein bS6 to the central domain of the 16S rRNA, where it helps stabilize the platform of the 30S subunit. This is Small ribosomal subunit protein bS18 from Chlorobium phaeovibrioides (strain DSM 265 / 1930) (Prosthecochloris vibrioformis (strain DSM 265)).